Here is a 219-residue protein sequence, read N- to C-terminus: Orotate phosphoribosyltransferase (219 aa).

K26 is a binding site for 5-phospho-alpha-D-ribose 1-diphosphate. Position 34 to 35 (34 to 35 (FF)) interacts with orotate. Residues 72–73 (YK), R98, K99, K102, H104, and 124–132 (DDVITAGTA) contribute to the 5-phospho-alpha-D-ribose 1-diphosphate site. T128 and R156 together coordinate orotate.

Belongs to the purine/pyrimidine phosphoribosyltransferase family. PyrE subfamily. As to quaternary structure, homodimer. Mg(2+) serves as cofactor.

The enzyme catalyses orotidine 5'-phosphate + diphosphate = orotate + 5-phospho-alpha-D-ribose 1-diphosphate. It functions in the pathway pyrimidine metabolism; UMP biosynthesis via de novo pathway; UMP from orotate: step 1/2. Catalyzes the transfer of a ribosyl phosphate group from 5-phosphoribose 1-diphosphate to orotate, leading to the formation of orotidine monophosphate (OMP). The chain is Orotate phosphoribosyltransferase from Xanthomonas campestris pv. campestris (strain 8004).